The primary structure comprises 351 residues: Protein RecA (351 aa).

67-74 (GPESSGKT) serves as a coordination point for ATP.

The protein belongs to the RecA family.

Its subcellular location is the cytoplasm. In terms of biological role, can catalyze the hydrolysis of ATP in the presence of single-stranded DNA, the ATP-dependent uptake of single-stranded DNA by duplex DNA, and the ATP-dependent hybridization of homologous single-stranded DNAs. It interacts with LexA causing its activation and leading to its autocatalytic cleavage. The sequence is that of Protein RecA from Arthrobacter sp. (strain FB24).